The primary structure comprises 308 residues: Staphylococcal superantigen-like 4 (308 aa).

Residues 1–30 form the signal peptide; sequence MKITTIAKTSLALGLLTTGVITTTTQAANA. The segment at 32–117 is disordered; it reads TLSSTKVEAP…TTKQVPTEIN (86 aa). 2 stretches are compositionally biased toward polar residues: residues 33 to 47 and 55 to 76; these read LSST…TPPS and SKPN…TANA. Residues 77-93 are compositionally biased toward low complexity; sequence TTPPSTKVTTPPSTNTP. The segment covering 94–114 has biased composition (polar residues); that stretch reads QPMQSTKSDTPQSPTTKQVPT. Positions 180–278 are sialyl Lewis X-binding; it reads VDVFVVLEEN…VIKMKNGGKY (99 aa).

Belongs to the staphylococcal/streptococcal toxin family.

The protein localises to the secreted. Functionally, secreted protein that plays a role in immune innate response inhibition by interfering with host TLR2-mediated pathway. The polypeptide is Staphylococcal superantigen-like 4 (Staphylococcus aureus (strain NCTC 8325 / PS 47)).